The chain runs to 500 residues: Metacaspase-5 (500 aa).

The signal sequence occupies residues 1 to 18 (MDAALALLFGQVATAVLP). An important for catalytic activity region spans residues 19–63 (YVVNSIGRVPRPKRVDVKKAMGEAHQCRPVVPYRAPRPYTEGRVK). 2 N-linked (GlcNAc...) asparagine glycosylation sites follow: Asn-70 and Asn-113. Residue His-147 is part of the active site. Ca(2+) is bound by residues Asp-162, Asp-178, and Asp-179. Residue Cys-202 is part of the active site. Residue Asp-209 coordinates Ca(2+). 6 N-linked (GlcNAc...) asparagine glycosylation sites follow: Asn-219, Asn-235, Asn-258, Asn-264, Asn-283, and Asn-332. 2 disordered regions span residues 358–419 (EATL…QAYY) and 444–500 (QPPQ…PGRK). Over residues 379–389 (ASTSNGKSNPG) the composition is skewed to polar residues. The segment covering 444 to 461 (QPPQQAYYQPPQQAYYQP) has biased composition (low complexity).

It belongs to the peptidase C14B family.

The protein resides in the recycling endosome. Functionally, cysteine protease that cleaves specifically after arginine or lysine residues. The polypeptide is Metacaspase-5 (Trypanosoma brucei brucei).